The chain runs to 85 residues: Large ribosomal subunit protein bL27 (85 aa).

Positions 1–22 are disordered; that stretch reads MAHKKGQGSSRNGRDSPGQRRG.

Belongs to the bacterial ribosomal protein bL27 family.

This Anaeromyxobacter dehalogenans (strain 2CP-1 / ATCC BAA-258) protein is Large ribosomal subunit protein bL27.